We begin with the raw amino-acid sequence, 358 residues long: Alanine racemase (358 aa).

Lysine 34 functions as the Proton acceptor; specific for D-alanine in the catalytic mechanism. Residue lysine 34 is modified to N6-(pyridoxal phosphate)lysine. Position 129 (arginine 129) interacts with substrate. Residue tyrosine 254 is the Proton acceptor; specific for L-alanine of the active site. Substrate is bound at residue methionine 302.

The protein belongs to the alanine racemase family. The cofactor is pyridoxal 5'-phosphate.

It carries out the reaction L-alanine = D-alanine. It functions in the pathway amino-acid biosynthesis; D-alanine biosynthesis; D-alanine from L-alanine: step 1/1. Functionally, catalyzes the interconversion of L-alanine and D-alanine. May also act on other amino acids. In Vibrio parahaemolyticus serotype O3:K6 (strain RIMD 2210633), this protein is Alanine racemase (alr).